The following is a 189-amino-acid chain: Elongation factor P (189 aa).

Residue K35 is modified to N6-(3,6-diaminohexanoyl)-5-hydroxylysine.

Belongs to the elongation factor P family. Post-translationally, may be beta-lysylated on the epsilon-amino group of Lys-35 by the combined action of EpmA and EpmB, and then hydroxylated on the C5 position of the same residue by EpmC (if this protein is present). Lysylation is critical for the stimulatory effect of EF-P on peptide-bond formation. The lysylation moiety may extend toward the peptidyltransferase center and stabilize the terminal 3-CCA end of the tRNA. Hydroxylation of the C5 position on Lys-35 may allow additional potential stabilizing hydrogen-bond interactions with the P-tRNA.

Its subcellular location is the cytoplasm. Its pathway is protein biosynthesis; polypeptide chain elongation. In terms of biological role, involved in peptide bond synthesis. Alleviates ribosome stalling that occurs when 3 or more consecutive Pro residues or the sequence PPG is present in a protein, possibly by augmenting the peptidyl transferase activity of the ribosome. Modification of Lys-35 is required for alleviation. This Wigglesworthia glossinidia brevipalpis protein is Elongation factor P.